The following is a 264-amino-acid chain: ORC1-type DNA replication protein 2 (264 aa).

ATP is bound by residues 73–77, Y220, and R232; that span reads TGKSL.

It belongs to the CDC6/cdc18 family.

Its function is as follows. Involved in regulation of DNA replication. The chain is ORC1-type DNA replication protein 2 (orc2) from Halobacterium salinarum (strain ATCC 700922 / JCM 11081 / NRC-1) (Halobacterium halobium).